The following is a 452-amino-acid chain: UDP-glycosyltransferase 76E4 (452 aa).

Residues threonine 274, 333 to 335 (APQ), 350 to 358 (HCGWNSTLE), and 372 to 375 (QGEQ) contribute to the UDP-alpha-D-glucose site.

This sequence belongs to the UDP-glycosyltransferase family.

In Arabidopsis thaliana (Mouse-ear cress), this protein is UDP-glycosyltransferase 76E4 (UGT76E4).